We begin with the raw amino-acid sequence, 317 residues long: Ribosomal RNA large subunit methyltransferase F (317 aa).

It belongs to the methyltransferase superfamily. METTL16/RlmF family.

It is found in the cytoplasm. It catalyses the reaction adenosine(1618) in 23S rRNA + S-adenosyl-L-methionine = N(6)-methyladenosine(1618) in 23S rRNA + S-adenosyl-L-homocysteine + H(+). In terms of biological role, specifically methylates the adenine in position 1618 of 23S rRNA. The sequence is that of Ribosomal RNA large subunit methyltransferase F from Pseudomonas putida (strain ATCC 700007 / DSM 6899 / JCM 31910 / BCRC 17059 / LMG 24140 / F1).